Here is a 123-residue protein sequence, read N- to C-terminus: Fluoride-specific ion channel FluC (123 aa).

The next 4 membrane-spanning stretches (helical) occupy residues 7-27, 39-59, 68-88, and 100-120; these read VAIALGGALGALARFYISGIL, LVNSIASFILGYIYGLLFWGI, FFGTGFCGALSTFSTFSYETF, and ALNISANVIITVSLVFIGFIL. Na(+)-binding residues include Gly75 and Ser78.

This sequence belongs to the fluoride channel Fluc/FEX (TC 1.A.43) family.

The protein resides in the cell membrane. It carries out the reaction fluoride(in) = fluoride(out). Its activity is regulated as follows. Na(+) is not transported, but it plays an essential structural role and its presence is essential for fluoride channel function. Fluoride-specific ion channel. Important for reducing fluoride concentration in the cell, thus reducing its toxicity. In Thermococcus onnurineus (strain NA1), this protein is Fluoride-specific ion channel FluC.